Consider the following 231-residue polypeptide: Flagellar L-ring protein (231 aa).

The first 18 residues, 1 to 18 (MNRLLSLFALGGAVLLAG), serve as a signal peptide directing secretion. C19 is lipidated: N-palmitoyl cysteine. C19 carries S-diacylglycerol cysteine lipidation.

The protein belongs to the FlgH family. As to quaternary structure, the basal body constitutes a major portion of the flagellar organelle and consists of four rings (L,P,S, and M) mounted on a central rod.

It localises to the cell outer membrane. The protein localises to the bacterial flagellum basal body. In terms of biological role, assembles around the rod to form the L-ring and probably protects the motor/basal body from shearing forces during rotation. This Pseudomonas putida (strain W619) protein is Flagellar L-ring protein.